We begin with the raw amino-acid sequence, 267 residues long: DCN1-like protein 2 (267 aa).

A disordered region spans residues 1 to 48; that stretch reads MTRKYTKKSSGSTASTTNSTAEIVDLTTSTSSVGKKRKSPDEKAQPIT. Low complexity predominate over residues 8–21; the sequence is KSSGSTASTTNSTA. Positions 75–262 constitute a DCUN1 domain; the sequence is HYTYLYTYIF…LLDQFSEWVQ (188 aa).

This is DCN1-like protein 2 from Dictyostelium discoideum (Social amoeba).